We begin with the raw amino-acid sequence, 221 residues long: Protein GrpE 1 (221 aa).

Disordered regions lie at residues 1–44 and 192–221; these read MTEE…AAAQ and VAEP…PEEG. Residues 26–44 show a composition bias toward low complexity; that stretch reads KAAPSEGAAPAGDAAAAAQ. Positions 203 to 221 are enriched in basic and acidic residues; the sequence is KADEAEAADDKESGGPEEG.

It belongs to the GrpE family. As to quaternary structure, homodimer.

It localises to the cytoplasm. Functionally, participates actively in the response to hyperosmotic and heat shock by preventing the aggregation of stress-denatured proteins, in association with DnaK and GrpE. It is the nucleotide exchange factor for DnaK and may function as a thermosensor. Unfolded proteins bind initially to DnaJ; upon interaction with the DnaJ-bound protein, DnaK hydrolyzes its bound ATP, resulting in the formation of a stable complex. GrpE releases ADP from DnaK; ATP binding to DnaK triggers the release of the substrate protein, thus completing the reaction cycle. Several rounds of ATP-dependent interactions between DnaJ, DnaK and GrpE are required for fully efficient folding. The polypeptide is Protein GrpE 1 (Streptomyces avermitilis (strain ATCC 31267 / DSM 46492 / JCM 5070 / NBRC 14893 / NCIMB 12804 / NRRL 8165 / MA-4680)).